Reading from the N-terminus, the 469-residue chain is Tetratricopeptide repeat protein 38 (469 aa).

At A2 the chain carries N-acetylalanine. Position 5 is a phosphoserine (S5). TPR repeat units follow at residues 108 to 141 (REQLHVSAVETFANGNFPKACELWEQILQDHPTD), 180 to 213 (SYVKGIYSFGLMETNFYDQAEKLAKEALSINPTD), and 252 to 285 (CHNYWHWALYLIEKGEYEAALTIYDTHILPSLQA).

The protein belongs to the TTC38 family.

This is Tetratricopeptide repeat protein 38 (TTC38) from Homo sapiens (Human).